A 144-amino-acid polypeptide reads, in one-letter code: Deoxyuridine 5'-triphosphate nucleotidohydrolase (144 aa).

Residues 63–65 (RSG), Asn76, 80–82 (TID), and Lys90 contribute to the substrate site.

Belongs to the dUTPase family. Mg(2+) serves as cofactor.

The catalysed reaction is dUTP + H2O = dUMP + diphosphate + H(+). Its pathway is pyrimidine metabolism; dUMP biosynthesis; dUMP from dCTP (dUTP route): step 2/2. Functionally, this enzyme is involved in nucleotide metabolism: it produces dUMP, the immediate precursor of thymidine nucleotides and it decreases the intracellular concentration of dUTP so that uracil cannot be incorporated into DNA. This chain is Deoxyuridine 5'-triphosphate nucleotidohydrolase, found in Hydrogenobaculum sp. (strain Y04AAS1).